The following is a 750-amino-acid chain: Catalase A (750 aa).

Residues 30–49 form a disordered region; sequence ERDTADAHTQQPLTTDHGVR. Residues His-93 and Asn-166 contribute to the active site. A heme-binding site is contributed by Tyr-380.

It belongs to the catalase family. The cofactor is heme.

Its subcellular location is the peroxisome matrix. It catalyses the reaction 2 H2O2 = O2 + 2 H2O. Its function is as follows. Catalyzes the degradation of hydrogen peroxide (H(2)O(2)) generated by peroxisomal oxidases to water and oxygen, thereby protecting cells from the toxic effects of hydrogen peroxide. This Aspergillus fumigatus (strain ATCC MYA-4609 / CBS 101355 / FGSC A1100 / Af293) (Neosartorya fumigata) protein is Catalase A (catA).